The primary structure comprises 301 residues: PWI domain-containing protein C825.05c (301 aa).

Positions 26 to 137 (STKFPASYDT…YGIPEKFILE (112 aa)) constitute a PWI domain. Ser86 carries the post-translational modification Phosphoserine. Basic and acidic residues-rich tracts occupy residues 145-182 (LKDR…ERNG), 189-205 (TLDR…ERNR), and 215-229 (RFSE…DIRS). The segment at 145–301 (LKDRTEASKE…ESDSGTQKHD (157 aa)) is disordered. Ser199 carries the post-translational modification Phosphoserine. Over residues 244–253 (PTRRRERHYR) the composition is skewed to basic residues. Residues 254–289 (TRDDEGFDEFGRSRDGRWRESRTSYREKHRYDRDAL) show a composition bias toward basic and acidic residues. Polar residues predominate over residues 290–301 (SSESDSGTQKHD). Position 291 is a phosphoserine (Ser291).

It is found in the nucleus. The sequence is that of PWI domain-containing protein C825.05c from Schizosaccharomyces pombe (strain 972 / ATCC 24843) (Fission yeast).